The following is a 477-amino-acid chain: Adenylyl cyclase-associated protein 2 (477 aa).

Alanine 2 bears the N-acetylalanine mark. Disordered regions lie at residues 225-261 (LSSGPGLPPPPPPLPPPGPPPLFENEGKKEESSPSRS) and 274-321 (TKGL…SQKH). Pro residues predominate over residues 230-246 (GLPPPPPPLPPPGPPPL). Positions 298–320 (QTQSPTKSHTPSPTSPKSYPSQK) are enriched in low complexity. Phosphoserine is present on residues serine 301 and serine 309. One can recognise a C-CAP/cofactor C-like domain in the interval 317–455 (PSQKHAPVLE…QDGDYREFPI (139 aa)).

The protein belongs to the CAP family.

The protein resides in the cell membrane. In terms of biological role, involved in the regulation of actin polymerization. This chain is Adenylyl cyclase-associated protein 2 (CAP2), found in Homo sapiens (Human).